The primary structure comprises 201 residues: Small ribosomal subunit protein uS4c (201 aa).

A disordered region spans residues Gly-20–Tyr-44. The S4 RNA-binding domain maps to Met-89–Leu-152.

This sequence belongs to the universal ribosomal protein uS4 family. As to quaternary structure, part of the 30S ribosomal subunit. Contacts protein S5. The interaction surface between S4 and S5 is involved in control of translational fidelity.

The protein resides in the plastid. It localises to the chloroplast. One of the primary rRNA binding proteins, it binds directly to 16S rRNA where it nucleates assembly of the body of the 30S subunit. In terms of biological role, with S5 and S12 plays an important role in translational accuracy. The protein is Small ribosomal subunit protein uS4c (rps4) of Aethionema cordifolium (Lebanon stonecress).